A 182-amino-acid chain; its full sequence is ATP synthase subunit delta (182 aa).

This sequence belongs to the ATPase delta chain family. In terms of assembly, F-type ATPases have 2 components, F(1) - the catalytic core - and F(0) - the membrane proton channel. F(1) has five subunits: alpha(3), beta(3), gamma(1), delta(1), epsilon(1). CF(0) has four main subunits: a(1), b(1), b'(1) and c(10-14). The alpha and beta chains form an alternating ring which encloses part of the gamma chain. F(1) is attached to F(0) by a central stalk formed by the gamma and epsilon chains, while a peripheral stalk is formed by the delta, b and b' chains.

It is found in the cellular thylakoid membrane. Its function is as follows. F(1)F(0) ATP synthase produces ATP from ADP in the presence of a proton or sodium gradient. F-type ATPases consist of two structural domains, F(1) containing the extramembraneous catalytic core and F(0) containing the membrane proton channel, linked together by a central stalk and a peripheral stalk. During catalysis, ATP synthesis in the catalytic domain of F(1) is coupled via a rotary mechanism of the central stalk subunits to proton translocation. In terms of biological role, this protein is part of the stalk that links CF(0) to CF(1). It either transmits conformational changes from CF(0) to CF(1) or is implicated in proton conduction. This is ATP synthase subunit delta from Synechococcus sp. (strain WH7803).